A 143-amino-acid chain; its full sequence is Large ribosomal subunit protein uL13 (143 aa).

This sequence belongs to the universal ribosomal protein uL13 family. As to quaternary structure, part of the 50S ribosomal subunit.

This protein is one of the early assembly proteins of the 50S ribosomal subunit, although it is not seen to bind rRNA by itself. It is important during the early stages of 50S assembly. In Methylacidiphilum infernorum (isolate V4) (Methylokorus infernorum (strain V4)), this protein is Large ribosomal subunit protein uL13.